Here is a 419-residue protein sequence, read N- to C-terminus: Pygopus homolog 1 (419 aa).

Disordered regions lie at residues Met-1–Asp-64 and His-175–Asp-338. Residues Gly-18 to Val-30 show a composition bias toward gly residues. Residues Pro-35 to Lys-41 carry the Nuclear localization signal motif. Composition is skewed to polar residues over residues His-175–Ser-221 and Asp-240–Ala-255. Residues Val-276–Asn-286 are compositionally biased toward low complexity. Over residues Ser-287–Pro-307 the composition is skewed to polar residues. The PHD-type zinc-finger motif lies at Val-340–Asp-398. Residues Tyr-341–Ala-388 form an interaction with H3K4me2 region. An interaction with BCL9 region spans residues Gly-373 to Gly-391.

As to quaternary structure, interacts with BCL9 via The PHD-type zinc finger motiv, and thereby becomes part of the nuclear beta-catenin/TCF complex. Identified in a complex with BCL9L, CDC73, CTNNB1 and PYGO1. Interacts with histone H3 mono-, di- or tri-methylated at 'Lys4' (H3K4me1, H3K4me2, H3K4me3); the interaction is enhanced by the interaction with BCL9.

The protein resides in the nucleus. Functionally, involved in signal transduction through the Wnt pathway. The chain is Pygopus homolog 1 (PYGO1) from Homo sapiens (Human).